The chain runs to 431 residues: Bone morphogenetic protein 7 (431 aa).

A signal peptide spans 1–29; the sequence is MHVRSLRAAAPHSFVALWAPLFLLRSALA. Positions 30–292 are excised as a propeptide; the sequence is DFSLDNEVHS…ATEVHFRSIR (263 aa). N-linked (GlcNAc...) asparagine glycans are attached at residues N187, N302, N321, and N372. Positions 291–311 are disordered; that stretch reads IRSTGSKQRSQNRSKTPKNQE. Cystine bridges form between C330–C396, C359–C428, and C363–C430.

This sequence belongs to the TGF-beta family. As to quaternary structure, homodimer; disulfide-linked. Interacts with SOSTDC1. Interacts with TWSG1. Interacts with FBN1 (via N-terminal domain) and FBN2. Interacts with type I receptor ACVR1. Interacts with type II receptor ACVR2A. Interacts with NOG; this interaction inhibits canonical BMP signaling. Interacts with SCUBE3. Interacts with ERFE; the interaction inhibits BMP-induced transcription of HAMP. Interacts with TGFBR3. In terms of processing, several N-termini starting at positions 293, 300, 315 and 316 have been identified by direct sequencing resulting in secretion of different mature forms. As to expression, expressed in the kidney and bladder. Lower levels seen in the brain.

The protein resides in the secreted. Its function is as follows. Growth factor of the TGF-beta superfamily that plays important role in various biological processes, including embryogenesis, hematopoiesis, neurogenesis and skeletal morphogenesis. Initiates the canonical BMP signaling cascade by associating with type I receptor ACVR1 and type II receptor ACVR2A. Once all three components are bound together in a complex at the cell surface, ACVR2A phosphorylates and activates ACVR1. In turn, ACVR1 propagates signal by phosphorylating SMAD1/5/8 that travel to the nucleus and act as activators and repressors of transcription of target genes. For specific functions such as growth cone collapse in developing spinal neurons and chemotaxis of monocytes, also uses BMPR2 as type II receptor. Can also signal through non-canonical pathways such as P38 MAP kinase signaling cascade that promotes brown adipocyte differentiation through activation of target genes, including members of the SOX family of transcription factors. Promotes the expression of HAMP, this is repressed by its interaction with ERFE. The chain is Bone morphogenetic protein 7 (BMP7) from Homo sapiens (Human).